We begin with the raw amino-acid sequence, 783 residues long: Ubiquitin carboxyl-terminal hydrolase 1 (783 aa).

Disordered stretches follow at residues 1–22 (MPGV…KKNR) and 34–55 (KRAL…YKGS). Polar residues predominate over residues 7–16 (SESNGLSRGS). Phosphoserine is present on residues serine 16 and serine 42. A compositionally biased stretch (basic and acidic residues) spans 45–55 (NEEKTSEYKGS). The residue at position 67 (serine 67) is a Phosphoserine. The region spanning 81–783 (VGLNNLGNTC…TPYLLFYKKL (703 aa)) is the USP domain. Cysteine 90 serves as the catalytic Nucleophile. Residues 234 to 311 (EEYQKEEMSD…RKAAGDTLEI (78 aa)) form a disordered region. 2 stretches are compositionally biased toward basic and acidic residues: residues 250–273 (DNMR…KSDA) and 284–296 (ISKE…ENQR). The residue at position 473 (serine 473) is a Phosphoserine. Histidine 591 serves as the catalytic Proton acceptor. The disordered stretch occupies residues 685–722 (PDKVASTALPENRNSETNNTNGTDESDSNKESSDQTGI). Position 766 is a phosphoserine (serine 766).

It belongs to the peptidase C19 family. Interacts with FANCD2 and PCNA. Interacts with WDR48. Interacts with ATAD5; the interaction regulates USP1-mediated PCNA deubiquitination. Autocatalytic cleavage of USP1 following UV irradiation inactivates it, leading to an increase in ubiquitinated PCNA, recruitment of POLH and translesion synthesis. Post-translationally, ubiquitinated by the CRL2(KLHDC2) complex following autocatalytic cleavage, leading to its degradation: the CRL2(KLHDC2) complex recognizes the diglycine (Gly-Gly) at the C-terminus.

The protein localises to the nucleus. It catalyses the reaction Thiol-dependent hydrolysis of ester, thioester, amide, peptide and isopeptide bonds formed by the C-terminal Gly of ubiquitin (a 76-residue protein attached to proteins as an intracellular targeting signal).. Functionally, negative regulator of DNA damage repair which specifically deubiquitinates monoubiquitinated FANCD2. Also involved in PCNA-mediated translesion synthesis (TLS) by deubiquitinating monoubiquitinated PCNA. Has almost no deubiquitinating activity by itself and requires the interaction with WDR48 to have a high activity. This chain is Ubiquitin carboxyl-terminal hydrolase 1, found in Bos taurus (Bovine).